The following is a 521-amino-acid chain: Bacillolysin (521 aa).

The signal sequence occupies residues 1–27 (MGLGKKLSVAVAASFMSLTISLPGVQA). Residues 28-221 (AENPQLKENL…ILKKQNKVEH (194 aa)) constitute a propeptide, activation peptide. Ca(2+)-binding residues include Q283 and D360. Zn(2+) is bound at residue H364. E365 is a catalytic residue. Zn(2+) contacts are provided by H368 and E388. Residues D399, D402, D404, E407, and V411 each coordinate Ca(2+). H449 acts as the Proton donor in catalysis.

Belongs to the peptidase M4 family. Ca(2+) serves as cofactor. It depends on Zn(2+) as a cofactor.

Its subcellular location is the secreted. The enzyme catalyses Similar, but not identical, to that of thermolysin.. Its function is as follows. Extracellular zinc metalloprotease. The polypeptide is Bacillolysin (npr) (Bacillus amyloliquefaciens (Bacillus velezensis)).